Reading from the N-terminus, the 514-residue chain is Serine--tRNA ligase, cytoplasmic (514 aa).

Residue Met1 is modified to N-acetylmethionine. The segment at 9–61 (RVDKGGDPALIRETQEKRFKDPGLVDQLVKADSEWRRCRFRADNLNKLKNLCS) is interaction with tRNA. The residue at position 241 (Ser241) is a Phosphoserine. L-serine contacts are provided by Thr271 and Arg302. ATP-binding positions include 302 to 304 (RQE) and 318 to 321 (VHQF). Lys323 is subject to N6-acetyllysine. Glu325 contributes to the L-serine binding site. 391 to 394 (ELVS) is a binding site for ATP. Asn427 serves as a coordination point for L-serine. The segment at 473–514 (PAPIEQEPSKKQKKQHEGSKKKAAARDVTLENRLQNMEVTDA) is disordered. Residues 479 to 502 (EPSKKQKKQHEGSKKKAAARDVTL) show a composition bias toward basic and acidic residues. A Nuclear localization signal motif is present at residues 482–494 (KKQKKQHEGSKKK). Residues 504–514 (NRLQNMEVTDA) are compositionally biased toward polar residues.

It belongs to the class-II aminoacyl-tRNA synthetase family. Type-1 seryl-tRNA synthetase subfamily. In terms of assembly, homodimer. The tRNA molecule may bind across the dimer. Interacts with SIRT2. Interacts with METTL6; interaction is required for the tRNA N(3)-methylcytidine methyltransferase activity of METTL6. Brain.

It is found in the cytoplasm. The protein resides in the nucleus. It carries out the reaction tRNA(Ser) + L-serine + ATP = L-seryl-tRNA(Ser) + AMP + diphosphate + H(+). It catalyses the reaction tRNA(Sec) + L-serine + ATP = L-seryl-tRNA(Sec) + AMP + diphosphate + H(+). The protein operates within aminoacyl-tRNA biosynthesis; selenocysteinyl-tRNA(Sec) biosynthesis; L-seryl-tRNA(Sec) from L-serine and tRNA(Sec): step 1/1. Catalyzes the attachment of serine to tRNA(Ser) in a two-step reaction: serine is first activated by ATP to form Ser-AMP and then transferred to the acceptor end of tRNA(Ser). Is probably also able to aminoacylate tRNA(Sec) with serine, to form the misacylated tRNA L-seryl-tRNA(Sec), which will be further converted into selenocysteinyl-tRNA(Sec). In the nucleus, binds to the VEGFA core promoter and prevents MYC binding and transcriptional activation by MYC. Recruits SIRT2 to the VEGFA promoter, promoting deacetylation of histone H4 at 'Lys-16' (H4K16). Thereby, inhibits the production of VEGFA and sprouting angiogenesis mediated by VEGFA. The polypeptide is Serine--tRNA ligase, cytoplasmic (Homo sapiens (Human)).